The sequence spans 577 residues: Isocitrate dehydrogenase kinase/phosphatase (577 aa).

Residues 315 to 321 and Lys-336 each bind ATP; that span reads APGIRGM. Residue Asp-371 is part of the active site.

Belongs to the AceK family.

Its subcellular location is the cytoplasm. The enzyme catalyses L-seryl-[isocitrate dehydrogenase] + ATP = O-phospho-L-seryl-[isocitrate dehydrogenase] + ADP + H(+). Its function is as follows. Bifunctional enzyme which can phosphorylate or dephosphorylate isocitrate dehydrogenase (IDH) on a specific serine residue. This is a regulatory mechanism which enables bacteria to bypass the Krebs cycle via the glyoxylate shunt in response to the source of carbon. When bacteria are grown on glucose, IDH is fully active and unphosphorylated, but when grown on acetate or ethanol, the activity of IDH declines drastically concomitant with its phosphorylation. The polypeptide is Isocitrate dehydrogenase kinase/phosphatase (Escherichia fergusonii (strain ATCC 35469 / DSM 13698 / CCUG 18766 / IAM 14443 / JCM 21226 / LMG 7866 / NBRC 102419 / NCTC 12128 / CDC 0568-73)).